The chain runs to 469 residues: Adenosylhomocysteinase (469 aa).

Substrate-binding residues include Thr63, Asp139, and Glu164. 165–167 (TTT) provides a ligand contact to NAD(+). Residues Lys194 and Asp198 each contribute to the substrate site. NAD(+) contacts are provided by residues Asn199, 228–233 (GYGDVG), Glu251, Asn300, 321–323 (IGH), and Asn375.

This sequence belongs to the adenosylhomocysteinase family. NAD(+) is required as a cofactor.

The protein resides in the cytoplasm. The catalysed reaction is S-adenosyl-L-homocysteine + H2O = L-homocysteine + adenosine. The protein operates within amino-acid biosynthesis; L-homocysteine biosynthesis; L-homocysteine from S-adenosyl-L-homocysteine: step 1/1. In terms of biological role, may play a key role in the regulation of the intracellular concentration of adenosylhomocysteine. This Pseudomonas putida (strain GB-1) protein is Adenosylhomocysteinase.